The chain runs to 373 residues: MATSASSHLNKGIKQMYMNLPQGEKIQLMYIWVDGTGEGLRCKTRTLDCDPKCVEELPEWNFDGSSTFQSEGSNSDMYLHPVAMFRDPFRRDPNKLVFCEVFKYNRKPAETNLRHSCKRIMDMVSSQHPWFGMEQEYTLMGTDGHPFGWPSNGFPGPQGPYYCGVGADKAYGRDIVEAHYRACLYAGIKITGTNAEVMPAQWEFQIGPCEGIRMGDHLWVARFILHRVCEDFGVIATFDPKPIPGNWNGAGCHTNFSTKAMREENGLRCIEEAIDKLSKRHQYHIRAYDPKGGLDNARRLTGFHETSNINDFSAGVANRSASIRIPRIVGQEKKGYFEDRRPSANCDPYAVTEAIVRTCLLNETGDEPFQYKN.

Ala-2 bears the N-acetylalanine mark. Positions 2–25 (ATSASSHLNKGIKQMYMNLPQGEK) are required for glutamine-induced ubiquitination by CRL4(CRBN) and proteasomal degradation. N6-acetyllysine occurs at positions 11 and 14. A GS beta-grasp domain is found at 24 to 106 (EKIQLMYIWV…VFCEVFKYNR (83 aa)). At Tyr-104 the chain carries Phosphotyrosine. The GS catalytic domain occupies 113–373 (LRHSCKRIMD…TGDEPFQYKN (261 aa)). Glu-134 contributes to the ATP binding site. The Mn(2+) site is built by Glu-134, Glu-136, Glu-196, and Glu-203. Residue 203–208 (EFQIGP) coordinates ATP. 246 to 247 (NW) contributes to the L-glutamate binding site. His-253 serves as a coordination point for Mn(2+). Residues 255-257 (NFS), Arg-319, and Arg-324 contribute to the ATP site. Residue Arg-319 participates in L-glutamate binding. An ADP-binding site is contributed by 336–338 (YFE). Residue Glu-338 participates in Mn(2+) binding. Arg-340 lines the L-glutamate pocket. Ser-343 carries the post-translational modification Phosphoserine.

The protein belongs to the glutamine synthetase family. Decamer; composed of two pentamers. Interacts with PALMD. Interacts with RHOJ. Interacts with BEST2; this interaction tethers a fraction of GLUL to the membrane, causing a decrease of cytosolic glutamine synthase (GS) activity and inhibits the chloride channel activity of BEST2 by affecting the gating at the aperture in the absence of intracellular glutamate. The cofactor is Mg(2+). It depends on Mn(2+) as a cofactor. Palmitoylated; undergoes autopalmitoylation. In terms of processing, acetylated by EP300/p300; acetylation is stimulated by increased glutamine levels and promotes ubiquitin-mediated proteasomal degradation. Post-translationally, ubiquitinated by ZNRF1. Ubiquitinated by the DCX (DDB1-CUL4-X-box) E3 ubiquitin-protein ligase complex called CRL4(CRBN), leading to proteasomal degradation. As to expression, in the adult liver, expression is restricted to a small population of hepatocytes which form only a small rim of one to three hepatocytes around the central veins. Expressed in lung microvascular endothelial cells.

Its subcellular location is the cytoplasm. The protein localises to the cytosol. The protein resides in the microsome. It localises to the mitochondrion. It is found in the cell membrane. The enzyme catalyses L-glutamate + NH4(+) + ATP = L-glutamine + ADP + phosphate + H(+). It carries out the reaction L-cysteinyl-[protein] + hexadecanoyl-CoA = S-hexadecanoyl-L-cysteinyl-[protein] + CoA. Its activity is regulated as follows. Glutamine synthetase activity is inhibited by methionine sulfoximine (MSO). Glutamine synthetase that catalyzes the ATP-dependent conversion of glutamate and ammonia to glutamine. Its role depends on tissue localization: in the brain, it regulates the levels of toxic ammonia and converts neurotoxic glutamate to harmless glutamine, whereas in the liver, it is one of the enzymes responsible for the removal of ammonia. Plays a key role in ammonium detoxification during erythropoiesis: the glutamine synthetase activity is required to remove ammonium generated by porphobilinogen deaminase (HMBS) during heme biosynthesis to prevent ammonium accumulation and oxidative stress. Essential for proliferation of fetal skin fibroblasts. Independently of its glutamine synthetase activity, required for endothelial cell migration during vascular development. Involved in angiogenesis by regulating membrane localization and activation of the GTPase RHOJ, possibly by promoting RHOJ palmitoylation. May act as a palmitoyltransferase for RHOJ: able to autopalmitoylate and then transfer the palmitoyl group to RHOJ. Plays a role in ribosomal 40S subunit biogenesis. Through the interaction with BEST2, inhibits BEST2 channel activity by affecting the gating at the aperture in the absence of intracellular L-glutamate, but sensitizes BEST2 to intracellular L-glutamate, which promotes the opening of BEST2 and thus relieves its inhibitory effect on BEST2. In Rattus norvegicus (Rat), this protein is Glutamine synthetase.